The chain runs to 151 residues: UPF0208 membrane protein plu3094 (151 aa).

2 consecutive transmembrane segments (helical) span residues 46–65 (FGIRFMPPLAIFTLTWQIAL) and 69–91 (LGPAVATALFACSLPMQGLWWLG).

It belongs to the UPF0208 family.

Its subcellular location is the cell inner membrane. The sequence is that of UPF0208 membrane protein plu3094 from Photorhabdus laumondii subsp. laumondii (strain DSM 15139 / CIP 105565 / TT01) (Photorhabdus luminescens subsp. laumondii).